We begin with the raw amino-acid sequence, 232 residues long: Imidazoleglycerol-phosphate dehydratase (232 aa).

This sequence belongs to the imidazoleglycerol-phosphate dehydratase family.

It catalyses the reaction D-erythro-1-(imidazol-4-yl)glycerol 3-phosphate = 3-(imidazol-4-yl)-2-oxopropyl phosphate + H2O. It participates in amino-acid biosynthesis; L-histidine biosynthesis; L-histidine from 5-phospho-alpha-D-ribose 1-diphosphate: step 6/9. This chain is Imidazoleglycerol-phosphate dehydratase (HIS3), found in Lachancea kluyveri (strain ATCC 58438 / CBS 3082 / BCRC 21498 / NBRC 1685 / JCM 7257 / NCYC 543 / NRRL Y-12651) (Yeast).